The chain runs to 215 residues: Fibroblast growth factor 17 (215 aa).

An N-terminal signal peptide occupies residues 1-22 (MYGINQRYLYISFHFFVVWCHA). A glycan (N-linked (GlcNAc...) asparagine) is linked at Asn137.

It belongs to the heparin-binding growth factors family.

The protein resides in the secreted. Functionally, involved in dorsal-ventral embryonic patterning, by promoting expression of bone morphogenetic protein (BMP) antagonists such as chd. Also involved in anterior-posterior neural patterning and in mesoderm induction. The polypeptide is Fibroblast growth factor 17 (fgf17) (Danio rerio (Zebrafish)).